The following is a 145-amino-acid chain: MRMGKIAVGYGFLLLLVFQLGVRASTLFNKYNVQELSSLKDLLERLEEKLSPGEESDVYAGSEDLVNDPEEDADLILDNVRKQAEKEFYKPAGFRDENLQRGRLRSIATSARSMNGCFGNRIERIGSWSSLGCNNSRFGSKKRIF.

The signal sequence occupies residues 1–24 (MRMGKIAVGYGFLLLLVFQLGVRA). Cys-117 and Cys-133 are joined by a disulfide.

This sequence belongs to the natriuretic peptide family. Heart atrium and ventricle, and to a very low extent in brain.

It is found in the secreted. Exhibits natriuretic and vasodepressor activity. The chain is Ventricular natriuretic peptide (vnp) from Acipenser transmontanus (White sturgeon).